The sequence spans 261 residues: 4-phosphopantoate--beta-alanine ligase (261 aa).

ATP contacts are provided by residues R17, R39, 181–182, 187–188, and 199–200; these read DL, RS, and NI.

This sequence belongs to the archaeal phosphopantothenate synthetase family. Homodimer.

It catalyses the reaction (R)-4-phosphopantoate + beta-alanine + ATP = (R)-4'-phosphopantothenate + AMP + diphosphate + H(+). It functions in the pathway cofactor biosynthesis; coenzyme A biosynthesis. In terms of biological role, catalyzes the condensation of (R)-4-phosphopantoate and beta-alanine to 4'-phosphopantothenate in the CoA biosynthesis pathway. The sequence is that of 4-phosphopantoate--beta-alanine ligase from Thermococcus onnurineus (strain NA1).